The sequence spans 471 residues: NALCN channel auxiliary factor 2 (471 aa).

A helical membrane pass occupies residues 47 to 67; it reads LASLLFFTVLLADHLWLCAGA. The interval 76–115 is disordered; it reads SAMRPPWGAGRERQPVPPRAVLPPPPPSPGEPSASSGTCG. Pro residues predominate over residues 90–105; that stretch reads PVPPRAVLPPPPPSPG. The N-linked (GlcNAc...) asparagine glycan is linked to N120. 2 disordered regions span residues 158–178 and 399–424; these read EPTTPAPPLRPPDSPSRAPEF and HYHPRHEPPSRVSNKPSLLPVSGGSR. Over residues 161 to 171 the composition is skewed to pro residues; that stretch reads TPAPPLRPPDS. A helical transmembrane segment spans residues 432-452; that stretch reads LCVLVLILLHTVVSFSSSQSG.

The protein belongs to the NALF family.

The protein localises to the membrane. In terms of biological role, probable component of the NALCN channel complex, a channel that regulates the resting membrane potential and controls neuronal excitability. This chain is NALCN channel auxiliary factor 2 (Nalf2), found in Mus musculus (Mouse).